Here is a 348-residue protein sequence, read N- to C-terminus: N-formyl peptide receptor 2 (348 aa).

N1 carries N-linked (GlcNAc...) asparagine glycosylation. Residues 1-24 (NFSTPLNEHEEVSYESAGYTVLRI) are Extracellular-facing. A helical transmembrane segment spans residues 25–47 (LPLVVLGVTFVLGVLGNGLVIWV). Residues 48-58 (AGFRMTRTVTT) lie on the Cytoplasmic side of the membrane. Residues 59–80 (ICYLNLALADFSFTATLPFLIV) traverse the membrane as a helical segment. Residues 81 to 97 (SMAMGEKWPFGWFLCKL) lie on the Extracellular side of the membrane. An intrachain disulfide couples C95 to C173. A helical transmembrane segment spans residues 98–118 (IHIVVDINLFGSVFLIGFIAL). At 119–137 (DRCICVLHPVWAQNHRTVS) the chain is on the cytoplasmic side. The helical transmembrane segment at 138 to 159 (LAMKVIVGPWILALVLTLPVFL) threads the bilayer. Residues 160–202 (FLTTVTIPNGDTYCTFNFASWGGTPEERQKVAITMLTARGIIR) lie on the Extracellular side of the membrane. Residues 203 to 223 (FVIGFSLPMSIVAICYGLIAA) traverse the membrane as a helical segment. Residues 224 to 239 (KIHKKGMIKSSRPLRV) lie on the Cytoplasmic side of the membrane. A helical transmembrane segment spans residues 240-263 (LTAVVASFFICWFPFQLVALLGTV). The Extracellular portion of the chain corresponds to 264-283 (WLKEMLFYGKYKIIDILVNP). A helical transmembrane segment spans residues 284–303 (TSSLAFFNSCLNPMLYVFVG). Over 304–348 (QDFRERLIHSLPTSLERALSEDSAPTNDTAASCASPPAETELQAM) the chain is Cytoplasmic. Residues 323-348 (SEDSAPTNDTAASCASPPAETELQAM) are disordered. Polar residues predominate over residues 326-335 (SAPTNDTAAS).

The protein belongs to the G-protein coupled receptor 1 family. In terms of assembly, interacts with APP; the interaction takes place at the cell surface and the complex is then rapidly internalized.

The protein localises to the cell membrane. Its function is as follows. Low affinity receptor for N-formyl-methionyl peptides, which are powerful neutrophil chemotactic factors. Binding of FMLP to the receptor causes activation of neutrophils. This response is mediated via a G-protein that activates a phosphatidylinositol-calcium second messenger system. Receptor for the chemokine-like protein FAM19A5, mediating FAM19A5-stimulated macrophage chemotaxis and the inhibitory effect on TNFSF11/RANKL-induced osteoclast differentiation. This chain is N-formyl peptide receptor 2 (FPR2), found in Gorilla gorilla gorilla (Western lowland gorilla).